The sequence spans 337 residues: Autophagy protein 5 (337 aa).

Residue Lys-128 forms a Glycyl lysine isopeptide (Lys-Gly) (interchain with G-Cter in ATG12) linkage. Residues 271–290 (RAQTSGEERSIDDTEEADGS) are disordered. Basic and acidic residues predominate over residues 276–290 (GEERSIDDTEEADGS).

Belongs to the ATG5 family. Conjugated to ATG12. In terms of processing, conjugated to ATG12; which is essential for autophagy. Conjugation with ATG12 involves ATG7 as an E1-like activating enzyme and ATG10 as an E2-like conjugating enzyme. In terms of tissue distribution, ubiquitous.

The protein localises to the cytoplasm. In terms of biological role, required for autophagy. Conjugation to ATG12 is essential for plant nutrient recycling. Involved in a negative feedback loop that modulates NPR1-dependent salicylic acid (SA) signaling and limits senescence and immunity-related programmed cell death (PCD) in plants. Involved in complete proteolysis of chloroplast stroma proteins in senescent leaves. Involved in the degradation of damaged peroxisomes. The protein is Autophagy protein 5 of Arabidopsis thaliana (Mouse-ear cress).